The sequence spans 316 residues: Tyrosine--tRNA ligase 2 (316 aa).

L-tyrosine is bound by residues Tyr26, Tyr146, Gln150, Asp153, and Gln168. Positions 219–223 match the 'KMSKS' region motif; the sequence is KMSKS. An ATP-binding site is contributed by Lys222.

The protein belongs to the class-I aminoacyl-tRNA synthetase family. TyrS type 4 subfamily. Homodimer.

Its subcellular location is the cytoplasm. It catalyses the reaction tRNA(Tyr) + L-tyrosine + ATP = L-tyrosyl-tRNA(Tyr) + AMP + diphosphate + H(+). In terms of biological role, catalyzes the attachment of tyrosine to tRNA(Tyr) in a two-step reaction: tyrosine is first activated by ATP to form Tyr-AMP and then transferred to the acceptor end of tRNA(Tyr). The polypeptide is Tyrosine--tRNA ligase 2 (Pyrobaculum aerophilum (strain ATCC 51768 / DSM 7523 / JCM 9630 / CIP 104966 / NBRC 100827 / IM2)).